We begin with the raw amino-acid sequence, 932 residues long: Protein hir1 (932 aa).

WD repeat units lie at residues 16-55 (GHRLSIFSIHIHPDGSRIATGGLDGTIRIWSTEAINRENE), 72-111 (THTGTVTSVRFSPNGQYLASGSDDRVVIIWHKEEAIPGLG), 132-171 (GHDNDIQDLCWSYDSQLVVSVGLDSSIIVWNGTTFERLKR), 174-213 (AHQSHVKGITFDPAGKYFATESDDRTIKVWRVSDFSIEKT), 222-265 (PLST…SEIN), 268-316 (GHEG…PLLS), and 320-361 (VFQK…DMVS). Polar residues-rich tracts occupy residues 405–426 (STTDPTLVPQSSSTPKSAQKTP) and 441–453 (TVDTNKLTASKEQ). 2 disordered regions span residues 405–470 (STTD…NEIP) and 498–520 (TPSTSRLASTQLQHTGSSQLPPQ). A compositionally biased stretch (low complexity) spans 498–507 (TPSTSRLAST).

It belongs to the WD repeat HIR1 family. As to quaternary structure, interacts with his3 and slm9.

It is found in the cytoplasm. The protein resides in the nucleus. Its function is as follows. Probably required for replication-independent chromatin assembly. Required for transcriptional silencing in the outer repeat (otr) centromeric repeats and the Tf2 long terminal repeat retrotransposons. Repressor of histone gene transcription in G1 arrested cells. Required for repression of htb1 gene expression outside of S phase. In Schizosaccharomyces pombe (strain 972 / ATCC 24843) (Fission yeast), this protein is Protein hir1 (hip1).